The primary structure comprises 142 residues: Transcriptional regulator MraZ (142 aa).

SpoVT-AbrB domains are found at residues 5–51 (ASSL…PRPE) and 77–120 (AMDV…DKAT).

This sequence belongs to the MraZ family. In terms of assembly, forms oligomers.

Its subcellular location is the cytoplasm. The protein localises to the nucleoid. The chain is Transcriptional regulator MraZ from Variovorax paradoxus (strain S110).